Reading from the N-terminus, the 41-residue chain is Pi-stichotoxin-Hcr5b (41 aa).

Cystine bridges form between Cys-4-Cys-37, Cys-6-Cys-30, and Cys-20-Cys-38.

The protein belongs to the sea anemone type 3 (BDS) potassium channel toxin family.

It localises to the secreted. The protein localises to the nematocyst. Remarkably non-selective toxin, with activity on many different ion channels. Weakly and reversibly inhibits rat and human homomeric ASIC1 (isoform ASIC1a) (IC(50)=4.8 uM, and IC(50)=14.6 uM), and ASIC3 (IC(50)=15.9 uM). Molecular modeling interaction with ASIC1a suggests that this peptide hinders the collapse of acidic pockets and stabilizes nonconducting channels state. It activates several potassium channels including Kv1.1/KCNA1, Kv1.2/KCNA2, and drosophila Shaker IR. It moderately to potently inhibits potassium channels including Kv1.3/KCNA3, Kv1.4/KCNA4, Kv1.5/KCNA5, Kv1.6/KCNA6, Kv2.1/KCNB1, Kv4.2/KCND2, Kv7.1/KCNQ1, Kv7.2/Kv7.3 (KCNQ2/KCNQ3), Kv7.4/KCNQ4, hERG/KCNH2, and C.elegans QKT1. On sodium channels, it moderately to potently inhibits Nav1.1/SCN1A, Nav1.2/SCN2A, Nav1.3/SCN3A, Nav1.4/SCN4A, Nav1.5/SCN5A, Nav1.6/SCN8A, Nav1.7/SCN9A, Nav1.8/SCN10A, and B.germanica BgNav. It also moderately to potently inhibits Cav3.1/CACNA1G, Cav3.2/CACNA1H, and Cav3.3/CACNA1I. Significant shifts in the voltage-current relationship are observed on Kv and Nav, depending on the channel isoform, whereas the toxin does not seem to modulate the voltage-sensor domains of Cav channels, acting mainly as a pore blocker. Does not activate nicotinic acetylcholine receptors (nAChR), but potentiates ACh-elicited current of human alpha-7/CHRNA7 nAChR. Is also able to bind T.californica muscle-type nAChRs. In vivo, causes an excitatory effect in mice behavior. Also shows antihyperalgesic and analgesic activity in the acid-induced muscle pain mice model, and weak anti-inflammatory effect in models of acute local inflammation. This Radianthus crispa (Leathery sea anemone) protein is Pi-stichotoxin-Hcr5b.